A 572-amino-acid chain; its full sequence is Proline--tRNA ligase (572 aa).

It belongs to the class-II aminoacyl-tRNA synthetase family. ProS type 1 subfamily. In terms of assembly, homodimer.

The protein resides in the cytoplasm. The enzyme catalyses tRNA(Pro) + L-proline + ATP = L-prolyl-tRNA(Pro) + AMP + diphosphate. Catalyzes the attachment of proline to tRNA(Pro) in a two-step reaction: proline is first activated by ATP to form Pro-AMP and then transferred to the acceptor end of tRNA(Pro). As ProRS can inadvertently accommodate and process non-cognate amino acids such as alanine and cysteine, to avoid such errors it has two additional distinct editing activities against alanine. One activity is designated as 'pretransfer' editing and involves the tRNA(Pro)-independent hydrolysis of activated Ala-AMP. The other activity is designated 'posttransfer' editing and involves deacylation of mischarged Ala-tRNA(Pro). The misacylated Cys-tRNA(Pro) is not edited by ProRS. This is Proline--tRNA ligase from Salmonella arizonae (strain ATCC BAA-731 / CDC346-86 / RSK2980).